A 207-amino-acid chain; its full sequence is Large ribosomal subunit protein uL4 (207 aa).

The segment at 48–70 (KAQKTRSEVSGGGAKPWRQKGTG) is disordered.

This sequence belongs to the universal ribosomal protein uL4 family. Part of the 50S ribosomal subunit.

One of the primary rRNA binding proteins, this protein initially binds near the 5'-end of the 23S rRNA. It is important during the early stages of 50S assembly. It makes multiple contacts with different domains of the 23S rRNA in the assembled 50S subunit and ribosome. Its function is as follows. Forms part of the polypeptide exit tunnel. This Francisella tularensis subsp. mediasiatica (strain FSC147) protein is Large ribosomal subunit protein uL4.